Consider the following 282-residue polypeptide: D-alanine aminotransferase (282 aa).

Tyrosine 32 provides a ligand contact to substrate. Arginine 51 is a binding site for pyridoxal 5'-phosphate. Substrate contacts are provided by arginine 99 and histidine 101. Lysine 146 serves as the catalytic Proton acceptor. N6-(pyridoxal phosphate)lysine is present on lysine 146. Pyridoxal 5'-phosphate is bound at residue glutamate 178.

The protein belongs to the class-IV pyridoxal-phosphate-dependent aminotransferase family. As to quaternary structure, homodimer. Pyridoxal 5'-phosphate is required as a cofactor.

The catalysed reaction is D-alanine + 2-oxoglutarate = D-glutamate + pyruvate. Its function is as follows. Acts on the D-isomers of alanine, leucine, aspartate, glutamate, aminobutyrate, norvaline and asparagine. The enzyme transfers an amino group from a substrate D-amino acid to the pyridoxal phosphate cofactor to form pyridoxamine and an alpha-keto acid in the first half-reaction. The second half-reaction is the reverse of the first, transferring the amino group from the pyridoxamine to a second alpha-keto acid to form the product D-amino acid via a ping-pong mechanism. This is an important process in the formation of D-alanine and D-glutamate, which are essential bacterial cell wall components. This chain is D-alanine aminotransferase (dat), found in Staphylococcus aureus (strain MSSA476).